The chain runs to 91 residues: Putative regulatory protein Cphy_2880 (91 aa).

Belongs to the RemA family.

This chain is Putative regulatory protein Cphy_2880, found in Lachnoclostridium phytofermentans (strain ATCC 700394 / DSM 18823 / ISDg) (Clostridium phytofermentans).